We begin with the raw amino-acid sequence, 224 residues long: Casparian strip membrane protein 1 (224 aa).

The tract at residues 1-22 (MSSGEPAAVSIPIHDHHGKAPA) is disordered. Topologically, residues 1-62 (MSSGEPAAVS…RGDHHRGSRC (62 aa)) are cytoplasmic. The helical transmembrane segment at 63–83 (LAFLDFILRIAAFGPALAAAI) threads the bilayer. Residues 84–110 (STGTSDETLSVFTEFYQFRARFDDFPA) lie on the Extracellular side of the membrane. A helical transmembrane segment spans residues 111–131 (FLFFLVANAIVAGYLVLSLPF). Topologically, residues 132 to 145 (SAVLVIRPQTIGLR) are cytoplasmic. The helical transmembrane segment at 146–166 (LLLLVCDMIMAAMLTAAASAA) threads the bilayer. Residues 167–200 (AAIVDLAHNGNLRANWVAICMQFHGFCQRTSGSV) are Extracellular-facing. The helical transmembrane segment at 201–221 (VASFLTVVILMFLVILAACSI) threads the bilayer. At 222–224 (RKR) the chain is on the cytoplasmic side.

Belongs to the Casparian strip membrane proteins (CASP) family. In terms of assembly, homodimer and heterodimers.

Its subcellular location is the cell membrane. Functionally, regulates membrane-cell wall junctions and localized cell wall deposition. Required for establishment of the Casparian strip membrane domain (CSD) and the subsequent formation of Casparian strips, a cell wall modification of the root endodermis that determines an apoplastic barrier between the intraorganismal apoplasm and the extraorganismal apoplasm and prevents lateral diffusion. The polypeptide is Casparian strip membrane protein 1 (Oryza sativa subsp. indica (Rice)).